The following is a 263-amino-acid chain: tRNA dimethylallyltransferase (263 aa).

The protein belongs to the IPP transferase family. In terms of assembly, monomer. It depends on Mg(2+) as a cofactor.

It catalyses the reaction adenosine(37) in tRNA + dimethylallyl diphosphate = N(6)-dimethylallyladenosine(37) in tRNA + diphosphate. Catalyzes the transfer of a dimethylallyl group onto the adenine at position 37 in tRNAs that read codons beginning with uridine, leading to the formation of N6-(dimethylallyl)adenosine (i(6)A). The chain is tRNA dimethylallyltransferase from Leifsonia xyli subsp. xyli (strain CTCB07).